The chain runs to 95 residues: Glutamyl-tRNA(Gln) amidotransferase subunit C (95 aa).

Belongs to the GatC family. In terms of assembly, heterotrimer of A, B and C subunits.

It carries out the reaction L-glutamyl-tRNA(Gln) + L-glutamine + ATP + H2O = L-glutaminyl-tRNA(Gln) + L-glutamate + ADP + phosphate + H(+). It catalyses the reaction L-aspartyl-tRNA(Asn) + L-glutamine + ATP + H2O = L-asparaginyl-tRNA(Asn) + L-glutamate + ADP + phosphate + 2 H(+). Functionally, allows the formation of correctly charged Asn-tRNA(Asn) or Gln-tRNA(Gln) through the transamidation of misacylated Asp-tRNA(Asn) or Glu-tRNA(Gln) in organisms which lack either or both of asparaginyl-tRNA or glutaminyl-tRNA synthetases. The reaction takes place in the presence of glutamine and ATP through an activated phospho-Asp-tRNA(Asn) or phospho-Glu-tRNA(Gln). This chain is Glutamyl-tRNA(Gln) amidotransferase subunit C, found in Mesorhizobium japonicum (strain LMG 29417 / CECT 9101 / MAFF 303099) (Mesorhizobium loti (strain MAFF 303099)).